A 177-amino-acid chain; its full sequence is B-phycoerythrin beta chain (177 aa).

(2R,3E)-phycoerythrobilin contacts are provided by cysteine 50 and cysteine 61. Asparagine 72 carries the N4-methylasparagine modification. Residues cysteine 82 and cysteine 158 each contribute to the (2R,3E)-phycoerythrobilin site.

Belongs to the phycobiliprotein family. In terms of assembly, heterotetramer of one alpha-1, one alpha-2, and two beta chains. In terms of processing, contains three covalently linked bilin chromophores.

Its subcellular location is the plastid. The protein localises to the chloroplast thylakoid membrane. Its function is as follows. Light-harvesting photosynthetic bile pigment-protein from the phycobiliprotein complex. The sequence is that of B-phycoerythrin beta chain (cpeB) from Guillardia theta (Cryptophyte).